We begin with the raw amino-acid sequence, 254 residues long: 5-oxoprolinase subunit A (254 aa).

Belongs to the LamB/PxpA family. In terms of assembly, forms a complex composed of PxpA, PxpB and PxpC.

It catalyses the reaction 5-oxo-L-proline + ATP + 2 H2O = L-glutamate + ADP + phosphate + H(+). Catalyzes the cleavage of 5-oxoproline to form L-glutamate coupled to the hydrolysis of ATP to ADP and inorganic phosphate. In Burkholderia mallei (strain NCTC 10247), this protein is 5-oxoprolinase subunit A.